The primary structure comprises 61 residues: Large ribosomal subunit protein uL30 (61 aa).

This sequence belongs to the universal ribosomal protein uL30 family. As to quaternary structure, part of the 50S ribosomal subunit.

The polypeptide is Large ribosomal subunit protein uL30 (Francisella philomiragia subsp. philomiragia (strain ATCC 25017 / CCUG 19701 / FSC 153 / O#319-036)).